A 20-amino-acid polypeptide reads, in one-letter code: MLASGLLLVALLACLTVMVL.

Belongs to the cytochrome P450 family. Heme serves as cofactor.

It is found in the endoplasmic reticulum membrane. Its subcellular location is the microsome membrane. The catalysed reaction is an organic molecule + reduced [NADPH--hemoprotein reductase] + O2 = an alcohol + oxidized [NADPH--hemoprotein reductase] + H2O + H(+). In terms of biological role, exhibits a high coumarin 7-hydroxylase activity. This is Cytochrome P450 2A7 (CYP2A7) from Papio sp. (Baboon).